We begin with the raw amino-acid sequence, 283 residues long: Beta-glucoside operon antiterminator (283 aa).

2 PRD domains span residues 65–170 (RIPL…SHMP) and 171–280 (EVMR…LQEQ).

This sequence belongs to the transcriptional antiterminator BglG family. Phosphorylated and inactivated by ArbF (EII-Bgl). The degree of phosphorylation is dependent on the presence or absence of beta-glucosides which act as inducers of the operon expression. Addition of inducer result in the rapid dephosphorylation of ArbG.

Mediates the positive regulation of the beta-glucoside (arb) operon by functioning as a transcriptional antiterminator. This is an RNA-binding protein that recognizes a specific sequence located just upstream of two termination sites within the operon. The polypeptide is Beta-glucoside operon antiterminator (arbG) (Dickeya chrysanthemi (Pectobacterium chrysanthemi)).